The sequence spans 410 residues: Lissencephaly-1 homolog (410 aa).

Residues 7–39 form the LisH domain; it reads QQEELQLAVHAYLVEAGHAEAAAAMAKSANLGD. Positions 55–80 form a coiled coil; sequence TTITRLQKRNMELQAEVEELRSSARA. WD repeat units lie at residues 104-143, 146-185, 188-227, 230-269, 294-333, 336-375, and 378-410; these read GHRL…FERS, GHTN…CTKT, GHDH…CLQT, GHSD…CKHV, MIFG…HLAR, GHDN…VSKT, and AHNH…WECN.

The protein belongs to the WD repeat LIS1/nudF family.

Its subcellular location is the cytoplasm. The protein localises to the cytoskeleton. It localises to the microtubule organizing center. The protein resides in the centrosome. In terms of biological role, positively regulates the activity of the minus-end directed microtubule motor protein dynein. May enhance dynein-mediated microtubule sliding by targeting dynein to the microtubule plus end. Required for several dynein- and microtubule-dependent processes. The polypeptide is Lissencephaly-1 homolog (Monosiga brevicollis (Choanoflagellate)).